The chain runs to 2092 residues: RNA-directed RNA polymerase L (2092 aa).

Positions 18 to 215 (VPIKHFDCTM…ELSSTDEELG (198 aa)) are endonuclease. 3 residues coordinate Mn(2+): His79, Asp111, and Glu125. Catalysis depends on Lys143, which acts as the For endonuclease activity. The region spanning 975–1166 (ARKQCKGPVW…AICFRMKKEL (192 aa)) is the RdRp catalytic domain. Asp1134 is a binding site for Mg(2+). The interval 1706–1822 (GAGTVGGFIK…PFGCPVYIIK (117 aa)) is cap-binding.

It belongs to the Bunyavirales RNA polymerase family. Homomultimer. Interacts with glycoprotein N; this interaction allows efficient polymerase packaging into virus particles. Interacts with nucleoprotein N. Mn(2+) is required as a cofactor. Requires Mg(2+) as cofactor.

The protein localises to the host Golgi apparatus. It is found in the host endoplasmic reticulum. Its subcellular location is the host endoplasmic reticulum-Golgi intermediate compartment. It localises to the virion. It carries out the reaction RNA(n) + a ribonucleoside 5'-triphosphate = RNA(n+1) + diphosphate. Its function is as follows. RNA-dependent RNA polymerase, which is responsible for the replication and transcription of the viral RNA genome using antigenomic RNA as an intermediate. During transcription, synthesizes subgenomic RNAs and assures their capping by a cap-snatching mechanism, which involves the endonuclease activity cleaving the host capped pre-mRNAs. These short capped RNAs are then used as primers for viral transcription. The 3'-end of subgenomic mRNAs molecules are not polyadenylated. During replication, the polymerase binds the 5' and 3' vRNA extremities at distinct sites. In turn, significant conformational changes occur in the polymerase and in vRNA to initiate active RNA synthesis. As a consequence of the use of the same enzyme for both transcription and replication, these mechanisms need to be well coordinated. The polypeptide is RNA-directed RNA polymerase L (Aedes (Bovine)).